Reading from the N-terminus, the 625-residue chain is Putative xanthine/uracil permease C887.17 (625 aa).

10 consecutive transmembrane segments (helical) span residues Ala49–Val69, Ala107–Met127, Glu154–Leu174, Ala192–Ile212, Met246–Tyr263, Phe328–Tyr348, Val369–Val389, Gly406–Phe426, Ile429–Thr449, and Ile465–Ile485. The disordered stretch occupies residues Glu595–Ile625.

Belongs to the nucleobase:cation symporter-2 (NCS2) (TC 2.A.40) family. Azg-like subfamily.

The protein resides in the golgi apparatus membrane. The sequence is that of Putative xanthine/uracil permease C887.17 from Schizosaccharomyces pombe (strain 972 / ATCC 24843) (Fission yeast).